The sequence spans 228 residues: uncharacterized protein (228 aa).

6 helical membrane passes run 14–34 (GWYI…MWLI), 53–73 (FLII…VLIV), 108–128 (GLTF…FFWL), 148–168 (AVKM…PIFF), 178–198 (TIIS…GFSI), and 200–220 (SVVY…YMAI).

The protein localises to the cell membrane. This is an uncharacterized protein from Bacillus subtilis (strain 168).